The following is an 87-amino-acid chain: Omega-theraphotoxin-Gr1a (87 aa).

Residues 1–24 (MKAQIFVVVLGLAALSVLCYGSEA) form the signal peptide. The propeptide occupies 25-49 (DESALHEEIFQLLAASDEVPKPQER). Cystine bridges form between Cys51-Cys65, Cys58-Cys70, and Cys64-Cys79. Val85 bears the Valine amide mark.

As to expression, expressed by the venom gland.

Its subcellular location is the secreted. Functionally, inhibits P/Q- (Cav2.1/CACNA1A) and N-type (Cav2.2/CACNA1B) voltage-gated calcium channel by modifying voltage-dependent gating. It selectively and reversibly blocks the calcium channels coupled to glutamate release. Also inhibits potassium channels (Kv2.1/KCNB1) with lower affinity. Has also been shown to weakly inhibit Kv11.1/KCNH2/ERG1, Kv1.2/KCNA2, Kv1.3/KCNA3, Nav1.5/SCN5A, Nav1.7/SCN9A and TRPV1. The protein is Omega-theraphotoxin-Gr1a of Grammostola rosea (Chilean rose tarantula).